The primary structure comprises 103 residues: Large ribosomal subunit protein bL21 (103 aa).

Belongs to the bacterial ribosomal protein bL21 family. Part of the 50S ribosomal subunit. Contacts protein L20.

This protein binds to 23S rRNA in the presence of protein L20. This is Large ribosomal subunit protein bL21 from Enterobacter sp. (strain 638).